Here is a 174-residue protein sequence, read N- to C-terminus: FMN reductase (NADH) RutF (174 aa).

Belongs to the non-flavoprotein flavin reductase family. RutF subfamily.

It catalyses the reaction FMNH2 + NAD(+) = FMN + NADH + 2 H(+). Catalyzes the reduction of FMN to FMNH2 which is used to reduce pyrimidine by RutA via the Rut pathway. The chain is FMN reductase (NADH) RutF from Agrobacterium fabrum (strain C58 / ATCC 33970) (Agrobacterium tumefaciens (strain C58)).